Reading from the N-terminus, the 355-residue chain is F-box only protein 32 (355 aa).

Residues 62–67 (KKRKKD) carry the Nuclear localization signal motif. The Nuclear export signal motif lies at 169-173 (LLQTL). The 49-residue stretch at 223 to 271 (LTFTDLPLCLQLNIMQRLSDGRDLVSLGQVAPDLHVLSEDRLLWKKLCQ) folds into the F-box domain. Positions 280–295 (RKRLILSDKGQLDWKK) match the Bipartite nuclear localization signal motif.

As to quaternary structure, part of the SCF (SKP1-CUL1-F-box) E3 ubiquitin-protein ligase complex SCF(FBXO32) formed of CUL1, SKP1, RBX1 and FBXO32.

It localises to the cytoplasm. The protein resides in the nucleus. It functions in the pathway protein modification; protein ubiquitination. Functionally, substrate recognition component of a SCF (SKP1-CUL1-F-box protein) E3 ubiquitin-protein ligase complex which mediates the ubiquitination and subsequent proteasomal degradation of target proteins. Probably recognizes and binds to phosphorylated target proteins during skeletal muscle atrophy. Recognizes TERF1. The sequence is that of F-box only protein 32 (FBXO32) from Bos taurus (Bovine).